Consider the following 354-residue polypeptide: V-type proton ATPase subunit C (354 aa).

Belongs to the V-ATPase C subunit family. V-ATPase is a heteromultimeric enzyme composed of a peripheral catalytic V1 complex (components A to H) attached to an integral membrane V0 proton pore complex (components: a, c, c', c'' and d).

It is found in the vacuole membrane. Its function is as follows. Subunit of the peripheral V1 complex of vacuolar ATPase. Subunit C is necessary for the assembly of the catalytic sector of the enzyme and is likely to have a specific function in its catalytic activity. V-ATPase is responsible for acidifying a variety of intracellular compartments in eukaryotic cells. This Hordeum vulgare (Barley) protein is V-type proton ATPase subunit C (VATC).